Here is a 193-residue protein sequence, read N- to C-terminus: Segregation and condensation protein B (193 aa).

The protein belongs to the ScpB family. As to quaternary structure, homodimer. Homodimerization may be required to stabilize the binding of ScpA to the Smc head domains. Component of a cohesin-like complex composed of ScpA, ScpB and the Smc homodimer, in which ScpA and ScpB bind to the head domain of Smc. The presence of the three proteins is required for the association of the complex with DNA.

It is found in the cytoplasm. In terms of biological role, participates in chromosomal partition during cell division. May act via the formation of a condensin-like complex containing Smc and ScpA that pull DNA away from mid-cell into both cell halves. The protein is Segregation and condensation protein B of Streptococcus thermophilus (strain CNRZ 1066).